Here is a 250-residue protein sequence, read N- to C-terminus: 2,3-bisphosphoglycerate-dependent phosphoglycerate mutase (250 aa).

Substrate contacts are provided by residues 10–17, 23–24, arginine 62, 89–92, lysine 100, 116–117, and 185–186; these read RHGESQWN, TG, ERHY, RR, and GN. The active-site Tele-phosphohistidine intermediate is histidine 11. Glutamate 89 functions as the Proton donor/acceptor in the catalytic mechanism.

It belongs to the phosphoglycerate mutase family. BPG-dependent PGAM subfamily. Homodimer.

The catalysed reaction is (2R)-2-phosphoglycerate = (2R)-3-phosphoglycerate. It functions in the pathway carbohydrate degradation; glycolysis; pyruvate from D-glyceraldehyde 3-phosphate: step 3/5. Catalyzes the interconversion of 2-phosphoglycerate and 3-phosphoglycerate. The polypeptide is 2,3-bisphosphoglycerate-dependent phosphoglycerate mutase (Sodalis glossinidius (strain morsitans)).